The following is a 338-amino-acid chain: Methionyl-tRNA formyltransferase (338 aa).

Serine 110–proline 113 lines the (6S)-5,6,7,8-tetrahydrofolate pocket.

It belongs to the Fmt family.

It catalyses the reaction L-methionyl-tRNA(fMet) + (6R)-10-formyltetrahydrofolate = N-formyl-L-methionyl-tRNA(fMet) + (6S)-5,6,7,8-tetrahydrofolate + H(+). Attaches a formyl group to the free amino group of methionyl-tRNA(fMet). The formyl group appears to play a dual role in the initiator identity of N-formylmethionyl-tRNA by promoting its recognition by IF2 and preventing the misappropriation of this tRNA by the elongation apparatus. The chain is Methionyl-tRNA formyltransferase from Parasynechococcus marenigrum (strain WH8102).